A 204-amino-acid polypeptide reads, in one-letter code: Holliday junction branch migration complex subunit RuvA (204 aa).

Residues 1 to 63 (MIGKLSGKAD…EEHIHLYGFL (63 aa)) form a domain I region. The tract at residues 64 to 142 (TLEEKNFFNL…KISSSSAIKD (79 aa)) is domain II. A flexible linker region spans residues 143–153 (SLNIKNITPVT). The interval 153-204 (TSNEVMKALINLGFSRFEAQNVVQGIITQNPKISIDELIKTALKNRNSKFFS) is domain III.

The protein belongs to the RuvA family. Homotetramer. Forms an RuvA(8)-RuvB(12)-Holliday junction (HJ) complex. HJ DNA is sandwiched between 2 RuvA tetramers; dsDNA enters through RuvA and exits via RuvB. An RuvB hexamer assembles on each DNA strand where it exits the tetramer. Each RuvB hexamer is contacted by two RuvA subunits (via domain III) on 2 adjacent RuvB subunits; this complex drives branch migration. In the full resolvosome a probable DNA-RuvA(4)-RuvB(12)-RuvC(2) complex forms which resolves the HJ.

Its subcellular location is the cytoplasm. In terms of biological role, the RuvA-RuvB-RuvC complex processes Holliday junction (HJ) DNA during genetic recombination and DNA repair, while the RuvA-RuvB complex plays an important role in the rescue of blocked DNA replication forks via replication fork reversal (RFR). RuvA specifically binds to HJ cruciform DNA, conferring on it an open structure. The RuvB hexamer acts as an ATP-dependent pump, pulling dsDNA into and through the RuvAB complex. HJ branch migration allows RuvC to scan DNA until it finds its consensus sequence, where it cleaves and resolves the cruciform DNA. In Rickettsia canadensis (strain McKiel), this protein is Holliday junction branch migration complex subunit RuvA.